A 767-amino-acid chain; its full sequence is Glucoamylase S1 (767 aa).

The N-terminal stretch at 1–21 (MQRPFLLAYLVLSLLFNSALG) is a signal peptide. Disordered stretches follow at residues 29–83 (RGSS…ETTI) and 125–149 (TTTV…PTTP). Over residues 30–48 (GSSSSNITSSGPSSTPFSS) the composition is skewed to low complexity. A glycan (N-linked (GlcNAc...) asparagine) is linked at Asn-35. The span at 49 to 66 (ATESFSTGTTVTPSSSKY) shows a compositional bias: polar residues. Low complexity-rich tracts occupy residues 71-83 (TETS…ETTI) and 131-149 (STSP…PTTP). N-linked (GlcNAc...) asparagine glycosylation is found at Asn-308, Asn-322, Asn-414, Asn-423, and Asn-434. The interval 348 to 691 (VSIERIFENI…ASTTLYQLIY (344 aa)) is h subunit. Residue Trp-455 participates in substrate binding. Asn-513 carries an N-linked (GlcNAc...) asparagine glycan. Asp-518 acts as the Proton acceptor in catalysis. The active-site Proton donor is Glu-521. Asn-546, Asn-645, Asn-650, Asn-720, and Asn-741 each carry an N-linked (GlcNAc...) asparagine glycan. The tract at residues 692 to 767 (RHISEQHDLV…LKATWEQTGN (76 aa)) is y subunit.

It belongs to the glycosyl hydrolase 15 family.

It carries out the reaction Hydrolysis of terminal (1-&gt;4)-linked alpha-D-glucose residues successively from non-reducing ends of the chains with release of beta-D-glucose.. In Saccharomyces cerevisiae (Baker's yeast), this protein is Glucoamylase S1 (STA1).